A 390-amino-acid polypeptide reads, in one-letter code: GTPase Obg (390 aa).

The region spanning 1–159 (MKFVDEATIL…RDLQLELMLL (159 aa)) is the Obg domain. The interval 127 to 146 (NTRFKSSVNRTPRQKTMGTP) is disordered. Residues 129–143 (RFKSSVNRTPRQKTM) show a composition bias toward polar residues. In terms of domain architecture, OBG-type G spans 160 to 333 (ADVGMLGMPN…LCWDVMHFII (174 aa)). Residues 166–173 (GMPNAGKS), 191–195 (FTTLV), 213–216 (DIPG), 283–286 (NKID), and 314–316 (SAA) contribute to the GTP site. Mg(2+) is bound by residues Ser-173 and Thr-193. Positions 364 to 384 (MEAEAEEEWDDDWDEDDDEGV) are enriched in acidic residues. The interval 364–390 (MEAEAEEEWDDDWDEDDDEGVEIVYQR) is disordered.

The protein belongs to the TRAFAC class OBG-HflX-like GTPase superfamily. OBG GTPase family. Monomer. Mg(2+) is required as a cofactor.

It localises to the cytoplasm. In terms of biological role, an essential GTPase which binds GTP, GDP and possibly (p)ppGpp with moderate affinity, with high nucleotide exchange rates and a fairly low GTP hydrolysis rate. Plays a role in control of the cell cycle, stress response, ribosome biogenesis and in those bacteria that undergo differentiation, in morphogenesis control. The chain is GTPase Obg from Cronobacter sakazakii (strain ATCC BAA-894) (Enterobacter sakazakii).